Consider the following 377-residue polypeptide: tRNA(Met) cytidine acetate ligase (377 aa).

ATP is bound by residues 7–20 (ITEY…HLFH), Gly100, Asn153, and Arg178.

It belongs to the TmcAL family.

It is found in the cytoplasm. It catalyses the reaction cytidine(34) in elongator tRNA(Met) + acetate + ATP = N(4)-acetylcytidine(34) in elongator tRNA(Met) + AMP + diphosphate. Functionally, catalyzes the formation of N(4)-acetylcytidine (ac(4)C) at the wobble position of elongator tRNA(Met), using acetate and ATP as substrates. First activates an acetate ion to form acetyladenylate (Ac-AMP) and then transfers the acetyl group to tRNA to form ac(4)C34. This chain is tRNA(Met) cytidine acetate ligase, found in Staphylococcus epidermidis (strain ATCC 35984 / DSM 28319 / BCRC 17069 / CCUG 31568 / BM 3577 / RP62A).